Reading from the N-terminus, the 655-residue chain is Very long-chain specific acyl-CoA dehydrogenase, mitochondrial (655 aa).

Residues 1–40 constitute a mitochondrion transit peptide; that stretch reads MRAARMAQSTGRQLLRLRGVSSWPGELLGQPRPGPARRPY. The interval 22-66 is disordered; sequence SWPGELLGQPRPGPARRPYASGVAQAAVDQSDSQPSEASTREKRA. Positions 41 to 482 are catalytic; sequence ASGVAQAAVD…ALQGCMDKGK (442 aa). The segment covering 49 to 59 has biased composition (polar residues); it reads VDQSDSQPSEA. K71 carries the post-translational modification N6-acetyllysine; alternate. K71 carries the N6-succinyllysine; alternate modification. K195 bears the N6-succinyllysine mark. Residue 214 to 223 coordinates FAD; the sequence is FCLTEPSSGS. C237 carries the S-nitrosocysteine modification. Residue K239 is modified to N6-acetyllysine; alternate. K239 carries the post-translational modification N6-succinyllysine; alternate. 249 to 251 lines the FAD pocket; it reads WIS. Residues K276 and K278 each carry the N6-acetyllysine; alternate modification. Residues K276 and K278 each carry the N6-succinyllysine; alternate modification. Residue K298 is modified to N6-acetyllysine. At K331 the chain carries N6-acetyllysine; alternate. Position 331 is an N6-succinyllysine; alternate (K331). K372 is modified (N6-succinyllysine). 461-463 provides a ligand contact to substrate; the sequence is FEG. The active-site Proton acceptor is the E462. 464-466 lines the FAD pocket; the sequence is TND. K482 bears the N6-acetyllysine; alternate mark. K482 is modified (N6-succinyllysine; alternate). Positions 483–516 are membrane-anchoring; it reads ELSGLGNALKNPFGNAGLLLGEAGKQLRRRAGLG. S517 and S522 each carry phosphoserine. K550 carries the post-translational modification N6-acetyllysine. K556 bears the N6-acetyllysine; alternate mark. K556 carries the N6-succinyllysine; alternate modification. Q562 serves as a coordination point for FAD. N6-succinyllysine is present on K639.

Belongs to the acyl-CoA dehydrogenase family. As to quaternary structure, homodimer. Homodimerizes after import into the mitochondrion. Requires FAD as cofactor. S-nitrosylation at Cys-237 in liver improves catalytic efficiency.

Its subcellular location is the mitochondrion inner membrane. It catalyses the reaction a very-long-chain 2,3-saturated fatty acyl-CoA + oxidized [electron-transfer flavoprotein] + H(+) = a very-long-chain (2E)-enoyl-CoA + reduced [electron-transfer flavoprotein]. It carries out the reaction dodecanoyl-CoA + oxidized [electron-transfer flavoprotein] + H(+) = (2E)-dodecenoyl-CoA + reduced [electron-transfer flavoprotein]. The enzyme catalyses tetradecanoyl-CoA + oxidized [electron-transfer flavoprotein] + H(+) = (2E)-tetradecenoyl-CoA + reduced [electron-transfer flavoprotein]. The catalysed reaction is oxidized [electron-transfer flavoprotein] + hexadecanoyl-CoA + H(+) = (2E)-hexadecenoyl-CoA + reduced [electron-transfer flavoprotein]. It catalyses the reaction octadecanoyl-CoA + oxidized [electron-transfer flavoprotein] + H(+) = (2E)-octadecenoyl-CoA + reduced [electron-transfer flavoprotein]. It carries out the reaction eicosanoyl-CoA + oxidized [electron-transfer flavoprotein] + H(+) = (2E)-eicosenoyl-CoA + reduced [electron-transfer flavoprotein]. The enzyme catalyses docosanoyl-CoA + oxidized [electron-transfer flavoprotein] + H(+) = (2E)-docosenoyl-CoA + reduced [electron-transfer flavoprotein]. The catalysed reaction is tetracosanoyl-CoA + oxidized [electron-transfer flavoprotein] + H(+) = (2E)-tetracosenoyl-CoA + reduced [electron-transfer flavoprotein]. Its pathway is lipid metabolism; mitochondrial fatty acid beta-oxidation. Functionally, very long-chain specific acyl-CoA dehydrogenase is one of the acyl-CoA dehydrogenases that catalyze the first step of mitochondrial fatty acid beta-oxidation, an aerobic process breaking down fatty acids into acetyl-CoA and allowing the production of energy from fats. The first step of fatty acid beta-oxidation consists in the removal of one hydrogen from C-2 and C-3 of the straight-chain fatty acyl-CoA thioester, resulting in the formation of trans-2-enoyl-CoA. Among the different mitochondrial acyl-CoA dehydrogenases, very long-chain specific acyl-CoA dehydrogenase acts specifically on acyl-CoAs with saturated 12 to 24 carbons long primary chains. The chain is Very long-chain specific acyl-CoA dehydrogenase, mitochondrial from Bos taurus (Bovine).